The sequence spans 397 residues: NADH-quinone oxidoreductase subunit H 1 (397 aa).

10 consecutive transmembrane segments (helical) span residues 7-27 (FIFI…TTLA), 84-104 (PFLA…GPVI), 120-140 (IGVL…ALAG), 156-176 (SAQM…PLLI), 198-218 (LLSG…AAFA), 258-278 (MITV…APWP), 279-299 (AAYG…LVLL), 313-333 (TFPA…LPMV), 337-357 (LLPL…FMWI), and 376-396 (FLFP…AWTT).

This sequence belongs to the complex I subunit 1 family. In terms of assembly, NDH-1 is composed of 14 different subunits. Subunits NuoA, H, J, K, L, M, N constitute the membrane sector of the complex.

The protein resides in the cell inner membrane. The catalysed reaction is a quinone + NADH + 5 H(+)(in) = a quinol + NAD(+) + 4 H(+)(out). NDH-1 shuttles electrons from NADH, via FMN and iron-sulfur (Fe-S) centers, to quinones in the respiratory chain. The immediate electron acceptor for the enzyme in this species is believed to be ubiquinone. Couples the redox reaction to proton translocation (for every two electrons transferred, four hydrogen ions are translocated across the cytoplasmic membrane), and thus conserves the redox energy in a proton gradient. This subunit may bind ubiquinone. This chain is NADH-quinone oxidoreductase subunit H 1, found in Solibacter usitatus (strain Ellin6076).